A 464-amino-acid polypeptide reads, in one-letter code: ATP synthase subunit beta 2 (464 aa).

Residue 153–160 coordinates ATP; that stretch reads GGAGVGKT.

The protein belongs to the ATPase alpha/beta chains family. F-type ATPases have 2 components, CF(1) - the catalytic core - and CF(0) - the membrane proton channel. CF(1) has five subunits: alpha(3), beta(3), gamma(1), delta(1), epsilon(1). CF(0) has three main subunits: a(1), b(2) and c(9-12). The alpha and beta chains form an alternating ring which encloses part of the gamma chain. CF(1) is attached to CF(0) by a central stalk formed by the gamma and epsilon chains, while a peripheral stalk is formed by the delta and b chains.

Its subcellular location is the cell inner membrane. It carries out the reaction ATP + H2O + 4 H(+)(in) = ADP + phosphate + 5 H(+)(out). In terms of biological role, produces ATP from ADP in the presence of a proton gradient across the membrane. The catalytic sites are hosted primarily by the beta subunits. In Paraburkholderia xenovorans (strain LB400), this protein is ATP synthase subunit beta 2.